The following is a 219-amino-acid chain: Probable GTP-binding protein EngB (219 aa).

In terms of domain architecture, EngB-type G spans Val-31–Pro-205. GTP-binding positions include Gly-39–Ser-46, Gly-66–Leu-70, Asp-84–Gly-87, Thr-151–Asp-154, and Phe-184–Ala-186. Positions 46 and 68 each coordinate Mg(2+).

This sequence belongs to the TRAFAC class TrmE-Era-EngA-EngB-Septin-like GTPase superfamily. EngB GTPase family. The cofactor is Mg(2+).

Its function is as follows. Necessary for normal cell division and for the maintenance of normal septation. This chain is Probable GTP-binding protein EngB, found in Shewanella putrefaciens (strain CN-32 / ATCC BAA-453).